Here is a 310-residue protein sequence, read N- to C-terminus: Zinc finger protein-like 1 (310 aa).

Residues 1-43 (MGLCKCPKRKVTNLFCFEHRVNVCEHCLVANHAKCIVQSYLQW) form a B box-type; degenerate zinc finger. Residues 1–266 (MGLCKCPKRK…RPLTLLQRAG (266 aa)) lie on the Cytoplasmic side of the membrane. The segment at 53–101 (CRLCNIPLASRETTRLVCYDLFHWACLNERAAQLPRNTAPAGYQCPSCN) adopts an RING-type; degenerate zinc-finger fold. The interval 145-231 (PEPLNTSDFS…RTPGLHGDCD (87 aa)) is disordered. Residues 148–165 (LNTSDFSDWSSFNASSTP) show a composition bias toward polar residues. A compositionally biased stretch (basic and acidic residues) spans 213 to 224 (KVYDTRDDDRTP). The chain crosses the membrane as a helical span at residues 267–287 (LLLLLGLLGFLALLALMSRLG). Residues 288 to 310 (RAAADSDPNLDPLMNPHIRVGPS) are Lumenal-facing.

It belongs to the ZFPL1 family. Interacts with GOLGA2/GM130. In terms of processing, phosphorylated. In terms of tissue distribution, expressed strongly in the exocrine pancreas.

Its subcellular location is the golgi apparatus. The protein resides in the cis-Golgi network membrane. In terms of biological role, required for cis-Golgi integrity and efficient ER to Golgi transport. Involved in the maintenance of the integrity of the cis-Golgi, possibly via its interaction with GOLGA2/GM130. This chain is Zinc finger protein-like 1 (ZFPL1), found in Homo sapiens (Human).